The sequence spans 127 residues: Fluoride-specific ion channel FluC (127 aa).

A run of 4 helical transmembrane segments spans residues 2-22, 35-55, 68-88, and 104-124; these read LSSLLAVFIGGGMGSVLRWAI, LGTLAVNLLGGFIIGLAIAIF, LITTGFCGGLTTFSTFSLEVV, and LLNLAGSLVMTLLAFMLVVWI. Na(+)-binding residues include glycine 75 and threonine 78.

Belongs to the fluoride channel Fluc/FEX (TC 1.A.43) family.

It is found in the cell inner membrane. The catalysed reaction is fluoride(in) = fluoride(out). With respect to regulation, na(+) is not transported, but it plays an essential structural role and its presence is essential for fluoride channel function. In terms of biological role, fluoride-specific ion channel. Important for reducing fluoride concentration in the cell, thus reducing its toxicity. The chain is Fluoride-specific ion channel FluC from Serratia proteamaculans (strain 568).